Reading from the N-terminus, the 272-residue chain is Undecaprenyl-diphosphatase (272 aa).

8 consecutive transmembrane segments (helical) span residues 4 to 24, 43 to 63, 86 to 106, 109 to 129, 145 to 165, 186 to 206, 222 to 242, and 249 to 269; these read FEVIKALFLGFVEGLTEFLPI, GGRVFEVVIQLGAILAVCWLY, ISVLIAFFPAVIIGVLAVDFI, VLFSPIVVAIALIVGALIIFW, ITFKQALLVGLAQCVAMIPGT, TEFSFFLAMPTMLGAATFDLI, VGFVAAFIAALLVVKALVLFV, and VFAWYRIVLGVIILIAAMFFN.

The protein belongs to the UppP family.

Its subcellular location is the cell inner membrane. It catalyses the reaction di-trans,octa-cis-undecaprenyl diphosphate + H2O = di-trans,octa-cis-undecaprenyl phosphate + phosphate + H(+). Catalyzes the dephosphorylation of undecaprenyl diphosphate (UPP). Confers resistance to bacitracin. In Acinetobacter baumannii (strain SDF), this protein is Undecaprenyl-diphosphatase.